Here is a 195-residue protein sequence, read N- to C-terminus: PRS fimbrial minor pilin protein (195 aa).

Residues 1-22 (MRLRFSVPLFFFGCVFVHGVFA) form the signal peptide. Cys-58 and Cys-97 are disulfide-bonded.

It belongs to the fimbrial protein family.

The protein localises to the secreted. Its subcellular location is the fimbrium. In terms of biological role, fimbriae (also called pili), polar filaments radiating from the surface of the bacterium to a length of 0.5-1.5 micrometers and numbering 100-300 per cell, enable bacteria to colonize the epithelium of specific host organs. Functionally, seems to anchor the pilus to the bacterial cell. In addition the stoichiometric relationship between PrsH and PrsA determines the pilus length. This Escherichia coli protein is PRS fimbrial minor pilin protein (prsH).